We begin with the raw amino-acid sequence, 441 residues long: Trigger factor (441 aa).

Residues 163–248 (GDQVVFDFVG…IKEVKKPVPA (86 aa)) form the PPIase FKBP-type domain.

It belongs to the FKBP-type PPIase family. Tig subfamily.

The protein localises to the cytoplasm. It catalyses the reaction [protein]-peptidylproline (omega=180) = [protein]-peptidylproline (omega=0). Involved in protein export. Acts as a chaperone by maintaining the newly synthesized protein in an open conformation. Functions as a peptidyl-prolyl cis-trans isomerase. The chain is Trigger factor from Jannaschia sp. (strain CCS1).